A 297-amino-acid polypeptide reads, in one-letter code: 4-hydroxy-tetrahydrodipicolinate synthase (297 aa).

Residue Thr-46 participates in pyruvate binding. The active-site Proton donor/acceptor is Tyr-134. The active-site Schiff-base intermediate with substrate is the Lys-162. Ile-204 lines the pyruvate pocket.

The protein belongs to the DapA family. As to quaternary structure, homotetramer; dimer of dimers.

It is found in the cytoplasm. The catalysed reaction is L-aspartate 4-semialdehyde + pyruvate = (2S,4S)-4-hydroxy-2,3,4,5-tetrahydrodipicolinate + H2O + H(+). The protein operates within amino-acid biosynthesis; L-lysine biosynthesis via DAP pathway; (S)-tetrahydrodipicolinate from L-aspartate: step 3/4. Functionally, catalyzes the condensation of (S)-aspartate-beta-semialdehyde [(S)-ASA] and pyruvate to 4-hydroxy-tetrahydrodipicolinate (HTPA). This Stenotrophomonas maltophilia (strain K279a) protein is 4-hydroxy-tetrahydrodipicolinate synthase.